The primary structure comprises 187 residues: dCTP deaminase (187 aa).

DCTP is bound by residues 107–112 (KSTYAR), 131–133 (TLE), Gln-152, Tyr-166, Lys-175, and Gln-176. The active-site Proton donor/acceptor is Glu-133.

Belongs to the dCTP deaminase family. Homotrimer.

It carries out the reaction dCTP + H2O + H(+) = dUTP + NH4(+). It functions in the pathway pyrimidine metabolism; dUMP biosynthesis; dUMP from dCTP (dUTP route): step 1/2. Catalyzes the deamination of dCTP to dUTP. This is dCTP deaminase from Ehrlichia canis (strain Jake).